The primary structure comprises 280 residues: Ribosomal RNA large subunit methyltransferase J (280 aa).

Residues His19, His42, Ser100, Glu118, 143-144, and Asp164 each bind S-adenosyl-L-methionine; that span reads DG. Catalysis depends on Asp164, which acts as the Proton acceptor.

This sequence belongs to the RlmJ family. In terms of assembly, monomer.

It carries out the reaction adenosine(2030) in 23S rRNA + S-adenosyl-L-methionine = N(6)-methyladenosine(2030) in 23S rRNA + S-adenosyl-L-homocysteine + H(+). Specifically methylates the adenine in position 2030 of 23S rRNA. Nascent 23S rRNA seems to be the natural substrate. Appears to be not necessary for ribosome assembly. Required for the utilization of extracellular DNA as the sole source of carbon and energy. This is Ribosomal RNA large subunit methyltransferase J from Escherichia coli (strain K12).